The primary structure comprises 238 residues: Zinc-finger homeodomain protein 11 (238 aa).

A ZF-HD dimerization-type; degenerate zinc finger spans residues 12-59 (YRECMRNHAAKLGTYANDGCCEYTPDDGHPAGLLCAACGCHRNFHRKD). Positions 119–188 (RRRTRTKFTE…NHKAGGGGGG (70 aa)) form a DNA-binding region, homeobox. Residues 183-200 (GGGGGGGGSGGPGAGGGA) show a composition bias toward gly residues. The segment at 183-238 (GGGGGGGGSGGPGAGGGAQTSSSTTRGGGDVGVGLSPAMGGDGEDDEEVRGSEMCM) is disordered.

Homo- and heterodimer with other ZFHD proteins.

The protein localises to the nucleus. Its function is as follows. Putative transcription factor. The polypeptide is Zinc-finger homeodomain protein 11 (ZHD11) (Oryza sativa subsp. indica (Rice)).